The following is a 253-amino-acid chain: Sulfate transporter CysZ (253 aa).

The next 4 membrane-spanning stretches (helical) occupy residues 31-51, 75-95, 151-171, and 222-242; these read FVIL…WWLF, LLWP…FSTI, IVLL…PVLW, and IPLL…AMWV.

It belongs to the CysZ family.

It is found in the cell inner membrane. In terms of biological role, high affinity, high specificity proton-dependent sulfate transporter, which mediates sulfate uptake. Provides the sulfur source for the cysteine synthesis pathway. This is Sulfate transporter CysZ from Escherichia coli (strain 55989 / EAEC).